The primary structure comprises 349 residues: Achromobactin transport system permease protein CbrC (349 aa).

The next 10 helical transmembrane spans lie at 32–52 (LALL…KLML), 82–102 (VLAA…QAMI), 111–131 (ILGI…FLAA), 138–158 (LPLA…WLAW), 168–188 (VLTG…MLVF), 190–210 (PLTT…GASW), 216–236 (LGGW…QVRV), 263–283 (VALA…GLIA), 290–310 (LVAP…AGLV), and 325–345 (DLPA…YLLI).

It belongs to the binding-protein-dependent transport system permease family. FecCD subfamily.

It localises to the cell inner membrane. Its function is as follows. Part of the binding-protein-dependent transport system CbrABCD for uptake of the siderophore achromobactin. Probably responsible for the translocation of the substrate across the membrane. This chain is Achromobactin transport system permease protein CbrC (cbrC), found in Dickeya dadantii (strain 3937) (Erwinia chrysanthemi (strain 3937)).